We begin with the raw amino-acid sequence, 673 residues long: Clotting factor G alpha subunit (673 aa).

The N-terminal stretch at 1–19 (MLVLLCCVVLHVGVARICC) is a signal peptide. A GH16 domain is found at 27-257 (LVWSDEFTNG…YVRVYQDAST (231 aa)). E137 acts as the Nucleophile in catalysis. The active-site Proton donor is E142. Residue N186 is glycosylated (N-linked (GlcNAc...) asparagine). The Ricin B-type lectin domain occupies 266 to 404 (LDGYYFVQNR…NQLSGQWKLI (139 aa)). 2 consecutive CBM6 domains span residues 411–533 (KLIQ…IKIT) and 549–671 (KLIQ…IRIT).

The protein belongs to the glycosyl hydrolase 16 family. Clotting factor G is a heterodimer composed of two non-covalently associated subunits, alpha and beta. In terms of processing, in presence of (1-&gt;3)-beta-glucan, proteolytically cleaved into a 55kDa and a 17kDa forms. In terms of tissue distribution, expressed in hemocytes (at protein level).

Its function is as follows. Component of the heterodimer clotting factor G which may play a role in defense mechanisms against fungi. Initiates a (1-&gt;3)-beta-glucan-sensing clotting pathway whereby the alpha subunit binds to glucans containing (1-&gt;3)-beta linkages, which are components of the fungal cell wall, and the beta subunit catalyzes the activation of proclotting enzyme. The chain is Clotting factor G alpha subunit from Tachypleus tridentatus (Japanese horseshoe crab).